We begin with the raw amino-acid sequence, 199 residues long: Holliday junction branch migration complex subunit RuvA (199 aa).

The segment at 1-63 (MIGCLIGEVF…EDAQQLYGFS (63 aa)) is domain I. Residues 64–142 (DAQEKTIFRT…TLAQGTSSAA (79 aa)) form a domain II region. A flexible linker region spans residues 143–150 (ALPQIQFV). The tract at residues 150-199 (VSNSPVAEAEAALQSLGYKPLEAQKAVAAVKADYTESADIIRAALKSMMK) is domain III.

The protein belongs to the RuvA family. Homotetramer. Forms an RuvA(8)-RuvB(12)-Holliday junction (HJ) complex. HJ DNA is sandwiched between 2 RuvA tetramers; dsDNA enters through RuvA and exits via RuvB. An RuvB hexamer assembles on each DNA strand where it exits the tetramer. Each RuvB hexamer is contacted by two RuvA subunits (via domain III) on 2 adjacent RuvB subunits; this complex drives branch migration. In the full resolvosome a probable DNA-RuvA(4)-RuvB(12)-RuvC(2) complex forms which resolves the HJ.

The protein resides in the cytoplasm. The RuvA-RuvB-RuvC complex processes Holliday junction (HJ) DNA during genetic recombination and DNA repair, while the RuvA-RuvB complex plays an important role in the rescue of blocked DNA replication forks via replication fork reversal (RFR). RuvA specifically binds to HJ cruciform DNA, conferring on it an open structure. The RuvB hexamer acts as an ATP-dependent pump, pulling dsDNA into and through the RuvAB complex. HJ branch migration allows RuvC to scan DNA until it finds its consensus sequence, where it cleaves and resolves the cruciform DNA. In Acinetobacter baumannii (strain ACICU), this protein is Holliday junction branch migration complex subunit RuvA.